The sequence spans 378 residues: Chorismate synthase (378 aa).

Residues 42 to 61 (IQAELDRRRPGQSPITTPRQ) form a disordered region. Residue Arg49 participates in NADP(+) binding. Residues 126 to 128 (RAS), Gly287, 302 to 306 (KPTAT), and Arg328 each bind FMN.

This sequence belongs to the chorismate synthase family. In terms of assembly, homotetramer. Requires FMNH2 as cofactor.

It catalyses the reaction 5-O-(1-carboxyvinyl)-3-phosphoshikimate = chorismate + phosphate. The protein operates within metabolic intermediate biosynthesis; chorismate biosynthesis; chorismate from D-erythrose 4-phosphate and phosphoenolpyruvate: step 7/7. Its function is as follows. Catalyzes the anti-1,4-elimination of the C-3 phosphate and the C-6 proR hydrogen from 5-enolpyruvylshikimate-3-phosphate (EPSP) to yield chorismate, which is the branch point compound that serves as the starting substrate for the three terminal pathways of aromatic amino acid biosynthesis. This reaction introduces a second double bond into the aromatic ring system. This is Chorismate synthase from Synechococcus sp. (strain JA-2-3B'a(2-13)) (Cyanobacteria bacterium Yellowstone B-Prime).